A 356-amino-acid polypeptide reads, in one-letter code: TPR repeat-containing protein P27G11.02 (356 aa).

Residues 1–20 (MRMQWIWKSRRSLQNVFIRR) constitute a mitochondrion transit peptide. TPR repeat units lie at residues 194–227 (SRLF…TMAN) and 290–323 (AAAF…RKDD).

It localises to the mitochondrion. This chain is TPR repeat-containing protein P27G11.02, found in Schizosaccharomyces pombe (strain 972 / ATCC 24843) (Fission yeast).